The chain runs to 862 residues: Cone cGMP-specific 3',5'-cyclic phosphodiesterase subunit alpha' (862 aa).

2 consecutive GAF domains span residues 75–224 (SMEK…SLVL) and 256–433 (DIER…GWSV). 3',5'-cyclic GMP contacts are provided by residues S97, N116, 169-172 (DKKT), and T176. Positions 486–819 (DEKDLIRILK…VEWKTRADEY (334 aa)) constitute a PDEase domain. The Proton donor role is filled by H562. 4 residues coordinate a divalent metal cation: H566, H602, D603, and D723. Residues 830–842 (KKKEEEAAAKKAE) show a composition bias toward basic and acidic residues. The disordered stretch occupies residues 830–862 (KKKEEEAAAKKAENAAGGGGGGEDGKSKTCIVL). A Cysteine methyl ester modification is found at C859. A lipid anchor (S-geranylgeranyl cysteine) is attached at C859. Positions 860–862 (IVL) are cleaved as a propeptide — removed in mature form.

This sequence belongs to the cyclic nucleotide phosphodiesterase family. In terms of assembly, composed of two alpha' subunits that are associated with 3 smaller proteins of 11, 13, and 15 kDa. It depends on a divalent metal cation as a cofactor.

It localises to the cell membrane. It carries out the reaction 3',5'-cyclic GMP + H2O = GMP + H(+). In terms of biological role, as cone-specific cGMP phosphodiesterase, it plays an essential role in light detection and cone phototransduction by rapidly decreasing intracellular levels of cGMP. The polypeptide is Cone cGMP-specific 3',5'-cyclic phosphodiesterase subunit alpha' (PDE6C) (Gallus gallus (Chicken)).